Reading from the N-terminus, the 250-residue chain is MANSTGKPTSSTQEDEEATSATEILAQLMQDIIDREEDIDDEDDIDDEVIDDEDYEVASLPLLQESQANQKQSREREEETEKNQPKRFKKQNMMKINIHDFSEETLRLIEVWYEAELDPQDIFGDNEVTRLFSRPIKKQLMSSDVDKDQCMLMLSKEQVKEKMLPFLEDSENPVKGIDVSVYGPDGKVQQMEFKMWNGDKTPVLTSGWKQFVEDYGLSMTCDFVTVWMFRHIKTRKLCFAIHYVKFSLRD.

Over residues 1-12 the composition is skewed to polar residues; that stretch reads MANSTGKPTSST. The segment at 1–90 is disordered; that stretch reads MANSTGKPTS…EKNQPKRFKK (90 aa). Positions 34–56 are enriched in acidic residues; that stretch reads DREEDIDDEDDIDDEVIDDEDYE. A compositionally biased stretch (basic and acidic residues) spans 72 to 84; sequence QSREREEETEKNQ. Positions 137-245 form a DNA-binding region, TF-B3; the sequence is KKQLMSSDVD…KLCFAIHYVK (109 aa).

It is found in the nucleus. This chain is Putative B3 domain-containing protein At4g03170, found in Arabidopsis thaliana (Mouse-ear cress).